A 189-amino-acid chain; its full sequence is Large ribosomal subunit protein eL20 (189 aa).

It belongs to the eukaryotic ribosomal protein eL20 family.

The protein resides in the cytoplasm. The chain is Large ribosomal subunit protein eL20 (RPL18A) from Tetrahymena thermophila.